The following is a 156-amino-acid chain: Small ribosomal subunit protein uS7 (156 aa).

Belongs to the universal ribosomal protein uS7 family. Part of the 30S ribosomal subunit. Contacts proteins S9 and S11.

In terms of biological role, one of the primary rRNA binding proteins, it binds directly to 16S rRNA where it nucleates assembly of the head domain of the 30S subunit. Is located at the subunit interface close to the decoding center, probably blocks exit of the E-site tRNA. The sequence is that of Small ribosomal subunit protein uS7 from Brucella abortus (strain S19).